We begin with the raw amino-acid sequence, 216 residues long: uncharacterized protein (216 aa).

The helical transmembrane segment at 1–21 (MTIVHFVGSLFFFFFFSYIFF) threads the bilayer.

It localises to the membrane. This is an uncharacterized protein from Saccharomyces cerevisiae (strain ATCC 204508 / S288c) (Baker's yeast).